A 599-amino-acid chain; its full sequence is Elongation factor 4 (599 aa).

The tr-type G domain occupies 3–185 (KNIRNFSIIA…AIVERIPPPS (183 aa)). GTP-binding positions include 15–20 (DHGKST) and 132–135 (NKID).

Belongs to the TRAFAC class translation factor GTPase superfamily. Classic translation factor GTPase family. LepA subfamily.

The protein localises to the cell membrane. The catalysed reaction is GTP + H2O = GDP + phosphate + H(+). Required for accurate and efficient protein synthesis under certain stress conditions. May act as a fidelity factor of the translation reaction, by catalyzing a one-codon backward translocation of tRNAs on improperly translocated ribosomes. Back-translocation proceeds from a post-translocation (POST) complex to a pre-translocation (PRE) complex, thus giving elongation factor G a second chance to translocate the tRNAs correctly. Binds to ribosomes in a GTP-dependent manner. This Syntrophomonas wolfei subsp. wolfei (strain DSM 2245B / Goettingen) protein is Elongation factor 4.